We begin with the raw amino-acid sequence, 318 residues long: Ferric enterobactin-binding periplasmic protein FepB (318 aa).

A signal peptide spans 1-26; sequence MRLAPLYRNALLLTGLLLSGIAAVQA. The Fe/B12 periplasmic-binding domain maps to 48 to 318; the sequence is RIVSTSVTLT…QVLDRLKALF (271 aa).

Belongs to the bacterial solute-binding protein 8 family. The complex is composed of two ATP-binding proteins (FepC), two transmembrane proteins (FepD and FepG) and a solute-binding protein (FepB).

It is found in the periplasm. Part of the ABC transporter complex FepBDGC involved in ferric enterobactin uptake. Binds ferric enterobactin. The chain is Ferric enterobactin-binding periplasmic protein FepB (fepB) from Escherichia coli O6:H1 (strain CFT073 / ATCC 700928 / UPEC).